The following is a 393-amino-acid chain: PPE family protein PPE26 (393 aa).

The protein belongs to the mycobacterial PPE family. As to quaternary structure, interacts with human TLR2.

Its function is as follows. Probably plays a key role in regulating innate and adaptive immune responses through human Toll-like receptor 2 (TLR2). Interacts with TLR2, leading to the subsequent activation of the mitogen-activated protein kinase (MAPK) and nuclear factor kappa B (NF-kappa-B) signaling pathways. Stimulates macrophage activation by augmenting pro-inflammatory cytokine production (TNF-alpha, IL-6 and IL-12p40) and the expression of cell surface molecules (CD80, CD86, MHC class I and II). Also participates in adaptive immunity by directing Th1-polarised immune responses. The polypeptide is PPE family protein PPE26 (Mycobacterium tuberculosis (strain ATCC 25618 / H37Rv)).